The following is a 122-amino-acid chain: Large ribosomal subunit protein bL12 (122 aa).

Belongs to the bacterial ribosomal protein bL12 family. Homodimer. Part of the ribosomal stalk of the 50S ribosomal subunit. Forms a multimeric L10(L12)X complex, where L10 forms an elongated spine to which 2 to 4 L12 dimers bind in a sequential fashion. Binds GTP-bound translation factors.

In terms of biological role, forms part of the ribosomal stalk which helps the ribosome interact with GTP-bound translation factors. Is thus essential for accurate translation. In Deinococcus radiodurans (strain ATCC 13939 / DSM 20539 / JCM 16871 / CCUG 27074 / LMG 4051 / NBRC 15346 / NCIMB 9279 / VKM B-1422 / R1), this protein is Large ribosomal subunit protein bL12.